Reading from the N-terminus, the 461-residue chain is Protein ultraspiracle homolog (461 aa).

Residues Met1–Leu112 are modulating. The tract at residues Pro26–Thr51 is disordered. The segment covering Ala27–Ser40 has biased composition (low complexity). Polar residues predominate over residues Asn41–Thr51. NR C4-type zinc fingers lie at residues Cys113 to Cys133 and Cys149 to Cys173. The nuclear receptor DNA-binding region spans Cys113 to Glu185. The interval Glu185–Arg192 is hinge. Residues Val203–His452 form the NR LBD domain.

This sequence belongs to the nuclear hormone receptor family. NR2 subfamily. Heterodimer of USP and ECR. Only the heterodimer is capable of high-affinity binding to ecdysone.

It is found in the nucleus. Receptor for ecdysone. May be an important modulator of insect metamorphosis. This is Protein ultraspiracle homolog (USP) from Manduca sexta (Tobacco hawkmoth).